The sequence spans 239 residues: Bradykinin-potentiating and C-type natriuretic peptides (239 aa).

Positions 1-23 are cleaved as a signal peptide; sequence MFVSRLAASGLLLLALLAVSLDG. Propeptides lie at residues 24-33 and 43-49; these read KPVQQWSHKG and LVVQQWS. At glutamine 50 the chain carries Pyrrolidone carboxylic acid. The propeptide occupies 62 to 64; it reads VVV. Glutamine 65 carries the pyrrolidone carboxylic acid modification. A propeptide spanning residues 76 to 82 is cleaved from the precursor; sequence LVVQQWS. The residue at position 83 (glutamine 83) is a Pyrrolidone carboxylic acid. Positions 95–97 are excised as a propeptide; that stretch reads LVV. Residue glutamine 98 is modified to Pyrrolidone carboxylic acid. Propeptides lie at residues 109 to 136 and 148 to 217; these read LLKP…AALD and GSKA…LAKK. Residues 132-205 form a disordered region; that stretch reads EAALDTPPAG…HHAVGGGGGG (74 aa). Over residues 161 to 171 the composition is skewed to low complexity; that stretch reads SKGASATSAAS. Positions 173–183 are enriched in basic and acidic residues; that stretch reads PMRDLRTDGKQ. Residues cysteine 223 and cysteine 239 are joined by a disulfide bond.

In the N-terminal section; belongs to the bradykinin-potentiating peptide family. The protein in the central section; belongs to the bradykinin inhibitor peptide family. It in the C-terminal section; belongs to the natriuretic peptide family. As to expression, expressed by the venom gland.

It is found in the secreted. Its function is as follows. Bradykinin-potentiating peptides both inhibit the activity of the angiotensin-converting enzyme (ACE) and enhances the action of bradykinin by inhibiting the peptidases that inactivate it. They act as indirect hypotensive agent. Inhibits angiotensin-converting enzyme (ACE) activity (IC(50)=4.25 uM), preventing the release of angiotensin and thus indirectly contributing to hypotension. In vivo, induce hypotensive response in both normotensive and hypertensive rats. In terms of biological role, antagonizes the vasodilatory actions of bradykinin at the B2 bradykinin receptor (BDKRB2). Functionally, has a vasorelaxant activity in rat aortic strips and a diuretic potency in anesthetized rats. May act by activating natriuretic receptors (NPR1 and/or NPR2). This Lachesis muta muta (Bushmaster) protein is Bradykinin-potentiating and C-type natriuretic peptides.